Here is a 793-residue protein sequence, read N- to C-terminus: Xaa-Pro dipeptidyl-peptidase (793 aa).

Active-site charge relay system residues include serine 363, aspartate 483, and histidine 514.

This sequence belongs to the peptidase S15 family. In terms of assembly, homodimer.

It localises to the cytoplasm. The enzyme catalyses Hydrolyzes Xaa-Pro-|- bonds to release unblocked, N-terminal dipeptides from substrates including Ala-Pro-|-p-nitroanilide and (sequentially) Tyr-Pro-|-Phe-Pro-|-Gly-Pro-|-Ile.. Its function is as follows. Removes N-terminal dipeptides sequentially from polypeptides having unsubstituted N-termini provided that the penultimate residue is proline. In Lactobacillus helveticus (strain DPC 4571), this protein is Xaa-Pro dipeptidyl-peptidase.